The primary structure comprises 103 residues: Small ribosomal subunit protein uS10 (103 aa).

Belongs to the universal ribosomal protein uS10 family. As to quaternary structure, part of the 30S ribosomal subunit.

Functionally, involved in the binding of tRNA to the ribosomes. In Campylobacter fetus subsp. fetus (strain 82-40), this protein is Small ribosomal subunit protein uS10.